The primary structure comprises 123 residues: Large ribosomal subunit protein bL19 (123 aa).

The protein belongs to the bacterial ribosomal protein bL19 family.

Its function is as follows. This protein is located at the 30S-50S ribosomal subunit interface and may play a role in the structure and function of the aminoacyl-tRNA binding site. This is Large ribosomal subunit protein bL19 from Ureaplasma urealyticum serovar 10 (strain ATCC 33699 / Western).